Reading from the N-terminus, the 2144-residue chain is Cadherin EGF LAG seven-pass G-type receptor 2 (2144 aa).

4 Cadherin domains span residues 1–40 (EDQVSYTLAITARDNGIPQKSDTTYLEILVNDVNDNAPQF), 41–146 (LRDS…PPVF), 147–248 (EQDE…PPVL), and 253–371 (ILFN…SPLL). At 1 to 1605 (EDQVSYTLAI…GEILPLKTLT (1605 aa)) the chain is on the extracellular side. N-linked (GlcNAc...) asparagine glycosylation is found at N261, N301, N407, and N437. The EGF-like 1; calcium-binding domain occupies 453–511 (DDNICLREPCENYMRCVSVLRFDSSAPFIASSSVLFRPIHPVGGLRCRCPPGFTGDYCE). Cystine bridges form between C457–C468, C462–C499, C501–C510, C517–C528, C522–C537, C539–C548, C557–C568, C562–C578, and C580–C590. Positions 513–549 (EVDLCYSRPCGPHGHCRSREGGYTCLCRDGYTGEHCE) constitute an EGF-like 2; calcium-binding domain. An EGF-like 3; calcium-binding domain is found at 553 to 591 (RSGRCTPGVCKNGGTCVNLLVGGFKCDCPSGDFEKPFCQ). Positions 592-796 (VTTRSFPARS…IANNGTVPGC (205 aa)) constitute a Laminin G-like 1 domain. N-linked (GlcNAc...) asparagine glycans are attached at residues N726 and N790. Disulfide bonds link C770–C796, C803–C814, C808–C823, and C825–C834. The 37-residue stretch at 799–835 (KKNVCDSNTCHNGGTCVNQWDAFSCECPLGFGGKSCA) folds into the EGF-like 4; calcium-binding domain. N816 carries the (3R)-3-hydroxyasparagine modification. The region spanning 839–1016 (ANPQRFLGSS…GESINVEPGC (178 aa)) is the Laminin G-like 2 domain. N966 is a glycosylation site (N-linked (GlcNAc...) asparagine). 14 disulfide bridges follow: C986–C1016, C1022–C1033, C1027–C1042, C1044–C1053, C1057–C1068, C1062–C1080, C1082–C1091, C1112–C1124, C1114–C1131, C1133–C1146, C1149–C1161, C1151–C1168, C1170–C1179, and C1182–C1194. Positions 1018-1053 (WPDPCDSNPCPTNSYCSNDWDSYSCSCDPGYYGDNC) constitute an EGF-like 5; calcium-binding domain. (3R)-3-hydroxyasparagine is present on N1035. N1052 is a glycosylation site (N-linked (GlcNAc...) asparagine). An EGF-like 6; calcium-binding domain is found at 1054–1092 (TNVCDLNPCEHQSACTRKPSAPHGYICECLPNYLGPYCE). The region spanning 1108 to 1147 (TCGPCNCDVSKGFDPDCNKTSGECHCKENHYRPPSSPTCL) is the EGF-like 7; calcium-binding domain. N-linked (GlcNAc...) asparagine glycosylation occurs at N1125. The 48-residue stretch at 1149–1196 (CDCYPTGSLSRVCDPEDGQCPCKPGVIGRQCDRCDNPFAEVTTNGCEV) folds into the Laminin EGF-like domain. Residues N1249, N1268, and N1286 are each glycosylated (N-linked (GlcNAc...) asparagine). Residues 1424-1594 (ETTVILPESV…AVLMDVSRRE (171 aa)) enclose the GAIN-B domain. The interval 1439–1466 (PMVRSAGPGEAQETEELARRQRRHPELS) is disordered. Cystine bridges form between C1544–C1576 and C1564–C1578. Positions 1544-1594 (CVFWNHSILVSGTGGWSARGCEVVFRNESHVSCQCNHMTSFAVLMDVSRRE) are GPS. Residues N1548 and N1570 are each glycosylated (N-linked (GlcNAc...) asparagine). A helical membrane pass occupies residues 1606-1626 (YVALGVTLAALMITFLFLTLL). Residues 1627-1641 (RALRSNQHGIRRNLT) are Cytoplasmic-facing. Residues 1642–1662 (AALGLAQLVFLLGINQADLPF) traverse the membrane as a helical segment. A1663 is a topological domain (extracellular). Residues 1664 to 1684 (CTVIAILLHFLYLCTFSWALL) form a helical membrane-spanning segment. Residues 1685-1705 (EALHLYRALTEVRDVNASPMR) lie on the Cytoplasmic side of the membrane. The chain crosses the membrane as a helical span at residues 1706–1726 (FYYMLGWGVPAFITGLAVGLD). Topologically, residues 1727–1744 (PEGYGNPDFCWLSIYDTL) are extracellular. A helical transmembrane segment spans residues 1745-1765 (IWSFAGPVAFAVSMSVFLYIL). The Cytoplasmic portion of the chain corresponds to 1766–1789 (SARASCAAQRQGFEKKGPVSGLRS). The helical transmembrane segment at 1790–1810 (SFTVLLLLSATWLLALLSVNS) threads the bilayer. At 1811-1816 (DTLLFH) the chain is on the extracellular side. A helical membrane pass occupies residues 1817 to 1837 (YLFAACNCVQGPFIFLSYVVL). Topologically, residues 1838–2144 (SKEVRKALKF…SEFLFFNFLH (307 aa)) are cytoplasmic. The tract at residues 1914 to 2109 (TLNPGQVPPG…PPRPPPRQSL (196 aa)) is disordered. The segment covering 1943 to 1955 (TDSDSDLSLEDDQ) has biased composition (acidic residues). The span at 2016 to 2025 (GTTTKENSGS) shows a compositional bias: polar residues. Residues 2028 to 2040 (LEERPRENGDALT) show a composition bias toward basic and acidic residues. Residues 2082 to 2095 (GTGSSRGSTASEGS) are compositionally biased toward polar residues.

Belongs to the G-protein coupled receptor 2 family. LN-TM7 subfamily. Heterodimer of 2 chains generated by proteolytic processing; the large extracellular N-terminal fragment and the membrane-bound C-terminal fragment predominantly remain associated and non-covalently linked. The iron and 2-oxoglutarate dependent 3-hydroxylation of aspartate and asparagine is (R) stereospecific within EGF domains. Post-translationally, autoproteolytically processed at the GPS region of the GAIN-B domain; this cleavage modulates receptor activity. In terms of tissue distribution, expressed in the brain. High expression in cerebellum and olfactory bulb. Weaker expression in cerebral cortex, hippocampus and brain stem.

Its subcellular location is the cell membrane. Its function is as follows. Receptor that may have an important role in cell/cell signaling during nervous system formation. The chain is Cadherin EGF LAG seven-pass G-type receptor 2 from Rattus norvegicus (Rat).